The chain runs to 80 residues: SPbeta prophage-derived thioredoxin-like protein YosR (80 aa).

The region spanning 1 to 80 (MRLIKLEQPN…ELDELLKELR (80 aa)) is the Thioredoxin domain. Residues cysteine 11 and cysteine 14 are joined by a disulfide bond.

It belongs to the thioredoxin family.

This is SPbeta prophage-derived thioredoxin-like protein YosR (yosR) from Bacillus subtilis (strain 168).